Here is a 375-residue protein sequence, read N- to C-terminus: 4,4'-diaponeurosporenoate glycosyltransferase (375 aa).

Helical transmembrane passes span 3-23 (WLSRILTVIVAMSMACGALIF), 164-184 (FYEGFSAIFNLMTVVGMNVFS), 277-297 (IMAAIVLWLFGSIASILGLCL), and 330-350 (FSNLLMVCHPLLFMFFTKIFI).

Belongs to the glycosyltransferase 2 family. CrtQ subfamily.

It is found in the cell membrane. It participates in carotenoid biosynthesis; staphyloxanthin biosynthesis; staphyloxanthin from farnesyl diphosphate: step 4/5. In terms of biological role, catalyzes the glycosylation of 4,4'-diaponeurosporenoate, i.e. the esterification of glucose at the C1'' position with the carboxyl group of 4,4'-diaponeurosporenic acid, to form glycosyl-4,4'-diaponeurosporenoate. This is a step in the biosynthesis of staphyloxanthin, an orange pigment present in most staphylococci strains. The protein is 4,4'-diaponeurosporenoate glycosyltransferase (crtQ) of Staphylococcus aureus (strain bovine RF122 / ET3-1).